Reading from the N-terminus, the 437-residue chain is O-antigen export system ATP-binding protein RfbB (437 aa).

Residues 37–256 (LRGKRQSRDA…YREAISLAEA (220 aa)) enclose the ABC transporter domain. An ATP-binding site is contributed by 69 to 76 (GRNGSGKS).

Belongs to the ABC transporter superfamily.

Its subcellular location is the cell inner membrane. May form an ATP-driven O-antigen export apparatus, in association with RfbA. The sequence is that of O-antigen export system ATP-binding protein RfbB (rfbB) from Myxococcus xanthus.